We begin with the raw amino-acid sequence, 62 residues long: Pelophylaxin-4 (62 aa).

The N-terminal stretch at 1–22 is a signal peptide; sequence MLTLKKSMLLIFFLGTINFSLC. Residues 23-45 constitute a propeptide that is removed on maturation; that stretch reads EQERNADEEERRDEPEERDVEVQ. L60 is subject to Leucine amide. G61 is a propeptide.

Expressed by the skin glands.

It localises to the secreted. Functionally, antimicrobial peptide. The sequence is that of Pelophylaxin-4 from Pelophylax fukienensis (Fukien gold-striped pond frog).